Reading from the N-terminus, the 451-residue chain is Tubulin gamma-1 chain (451 aa).

Position 142–148 (142–148 (AGGTGSG)) interacts with GTP.

The protein belongs to the tubulin family.

It localises to the cytoplasm. The protein localises to the cytoskeleton. Its subcellular location is the microtubule organizing center. It is found in the centrosome. The protein resides in the spindle. Functionally, tubulin is the major constituent of microtubules. The gamma chain is found at microtubule organizing centers (MTOC) such as the spindle poles or the centrosome, suggesting that it is involved in the minus-end nucleation of microtubule assembly. The protein is Tubulin gamma-1 chain (tubg1) of Xenopus laevis (African clawed frog).